The sequence spans 172 residues: Co-chaperone protein HscB homolog (172 aa).

The 68-residue stretch at 2 to 69 (NHFELFNLPV…DSRAAYLLAL (68 aa)) folds into the J domain.

Belongs to the HscB family. As to quaternary structure, interacts with HscA and stimulates its ATPase activity.

In terms of biological role, co-chaperone involved in the maturation of iron-sulfur cluster-containing proteins. Seems to help targeting proteins to be folded toward HscA. This is Co-chaperone protein HscB homolog from Acinetobacter baumannii (strain AB307-0294).